The chain runs to 508 residues: MKLAYWMYAGPAHIGTLRVASSFKNVHGIMHAPLGDDYFNVMRSMLERERNFTPVTASVVDRHVLARGSQEKVVDNITRKDEEENPDLIVLTPTCTSSILQEDLENFVERASLSTQGDVLLADVNHYRVNELQAADRTLDQIVQFYIQKARKNGDLLEEKTAKPSVNIIGVSTLGFHNQHDCTELKRLMADLGIEVNEVIPEGASVHNLKRLPQAWFNLIPYREIGHMSAHYLEKEFGMPFVDITPMGVVETARCIRKIQEVLNAQGADVNYEEYIENQTLHVSQAAWFSRSIDCQNLTGKKAVVYGDNTHAAAMTKILAREMGIHVVWAGTYCKYDQEWFRKEVSEYCDEVLINEDHGAIGDAIARVEPSAIFGTQMERHVGKRLNIPCGVIAAPIHIQDFPIGYKPFLGYEGTNQVADLVYNSFTLGMEDHLLEIFGGHDTKEVITKGISADSDLGWSADGQAELNKIPGFVRGKVKRNTEKFARERNITEITAEVLYAAKEAVGA.

A [4Fe-4S] cluster-binding site is contributed by aspartate 36. Aspartate 294 (proton donor) is an active-site residue. Substrate is bound at residue 429 to 430; that stretch reads GM.

The protein belongs to the ChlB/BchB/BchZ family. In terms of assembly, protochlorophyllide reductase is composed of three subunits; ChlL, ChlN and ChlB. Forms a heterotetramer of two ChlB and two ChlN subunits. It depends on [4Fe-4S] cluster as a cofactor.

The enzyme catalyses chlorophyllide a + oxidized 2[4Fe-4S]-[ferredoxin] + 2 ADP + 2 phosphate = protochlorophyllide a + reduced 2[4Fe-4S]-[ferredoxin] + 2 ATP + 2 H2O. It functions in the pathway porphyrin-containing compound metabolism; chlorophyll biosynthesis (light-independent). Its function is as follows. Component of the dark-operative protochlorophyllide reductase (DPOR) that uses Mg-ATP and reduced ferredoxin to reduce ring D of protochlorophyllide (Pchlide) to form chlorophyllide a (Chlide). This reaction is light-independent. The NB-protein (ChlN-ChlB) is the catalytic component of the complex. The sequence is that of Light-independent protochlorophyllide reductase subunit B from Acaryochloris marina (strain MBIC 11017).